We begin with the raw amino-acid sequence, 906 residues long: Microtubule-associated protein 6 (906 aa).

Residues methionine 1–phenylalanine 15 are calmodulin-binding. 3 S-palmitoyl cysteine lipidation sites follow: cysteine 5, cysteine 10, and cysteine 11. Disordered stretches follow at residues threonine 37–proline 56, threonine 65–alanine 411, lysine 441–lysine 651, asparagine 674–arginine 782, and alanine 817–proline 906. Residues glycine 41–leucine 50 are compositionally biased toward pro residues. Residues alanine 93–serine 117 are compositionally biased toward low complexity. Serine 98 carries the post-translational modification Phosphoserine. The mn 1 stretch occupies residues aspartate 116 to serine 139. Residues methionine 119–serine 139 show a composition bias toward basic and acidic residues. The interval arginine 124 to arginine 138 is calmodulin-binding. Tyrosine 141 bears the Phosphotyrosine mark. The segment covering proline 147 to tryptophan 171 has biased composition (basic and acidic residues). Residues glutamate 151 to lysine 174 are mn 2. Residues alanine 160–lysine 174 form a calmodulin-binding region. The residue at position 185 (serine 185) is a Phosphoserine. Positions proline 187–arginine 201 are calmodulin-binding. Phosphoserine is present on serine 207. A Mc-1 repeat occupies leucine 222–glycine 267. A 4 X approximate tandem repeat Mc region spans residues leucine 222–glycine 405. 7 calmodulin-binding regions span residues threonine 235–glutamate 249, aspartate 280–serine 294, arginine 325–arginine 339, arginine 375–histidine 389, arginine 435–lysine 449, arginine 486–cysteine 500, and proline 513–lysine 527. The stretch at proline 268–glycine 313 is one Mc-2 repeat. The Mc-3 repeat unit spans residues proline 314–glycine 359. The stretch at proline 360–glycine 405 is one Mc-4 repeat. The mn 3 stretch occupies residues serine 427–proline 450. Residues proline 496–lysine 505 are compositionally biased toward basic and acidic residues. Basic residues predominate over residues lysine 512–lysine 527. The span at lysine 549–proline 573 shows a compositional bias: basic and acidic residues. Phosphoserine is present on residues serine 632 and serine 687. Polar residues predominate over residues lysine 695 to proline 711. Basic and acidic residues predominate over residues proline 715–histidine 742. Serine 905 carries the phosphoserine modification.

The protein belongs to the STOP family. In terms of assembly, interacts with calmodulin (via C-terminus); the interaction is dependent on Ca(2+). Interacts (via C-terminus) with TMEM106B (via N-terminus). Interacts with ZDHHC13 (via ANK repeats). Interacts with ZDHHC17 (via ANK repeats). Palmitoylated. Probably depalmitoylated by ABHD17A, ABHD17B and ABHD17C. During neuronal polarization, palmitoylation and depalmitoylation cycles regulate MAP6 shuttling between secretory vesicles and microtubules, and its polarized distribution in the axon. In terms of tissue distribution, isoform 1 is specifically expressed in adult brain. Isoform 2 is predominantly expressed in embryonic brain; expression persists at low levels in the adult brain. Isoform 3 is expressed at high levels in lung and at lower levels in testis, heart, muscle and kidney (at protein level). Oligodendrocytes express a major isoform of 89 kDa (O-STOP). Astrocytes also express an isoform of 60 kDa (A-STOP).

It localises to the cytoplasm. The protein localises to the cytoskeleton. The protein resides in the golgi apparatus. Its subcellular location is the cell projection. It is found in the axon. It localises to the dendrite. The protein localises to the cytoplasmic vesicle. The protein resides in the secretory vesicle membrane. In terms of biological role, involved in microtubule stabilization in many cell types, including neuronal cells. Specifically has microtubule cold stabilizing activity. Involved in dendrite morphogenesis and maintenance by regulating lysosomal trafficking via its interaction with TMEM106B. Regulates KIF5A-mediated axonal cargo transport. Regulates axonal growth during neuron polarization. The protein is Microtubule-associated protein 6 (Map6) of Mus musculus (Mouse).